Here is a 320-residue protein sequence, read N- to C-terminus: Cytochrome f (320 aa).

Positions 1 to 35 are cleaved as a signal peptide; sequence MQTRNTFSWIREEITRSISVSLIIYIITWASISSA. The heme site is built by tyrosine 36, cysteine 56, cysteine 59, and histidine 60. A helical transmembrane segment spans residues 286 to 305; it reads VQGLLFFLGSVVLAQIFLVL.

Belongs to the cytochrome f family. In terms of assembly, the 4 large subunits of the cytochrome b6-f complex are cytochrome b6, subunit IV (17 kDa polypeptide, petD), cytochrome f and the Rieske protein, while the 4 small subunits are PetG, PetL, PetM and PetN. The complex functions as a dimer. Heme is required as a cofactor.

The protein resides in the plastid. It localises to the chloroplast thylakoid membrane. Component of the cytochrome b6-f complex, which mediates electron transfer between photosystem II (PSII) and photosystem I (PSI), cyclic electron flow around PSI, and state transitions. This is Cytochrome f (petA) from Arabidopsis thaliana (Mouse-ear cress).